The sequence spans 171 residues: uncharacterized protein (171 aa).

2 disordered regions span residues 68–112 (NKNN…DQPY) and 152–171 (LPEK…SIKN). Residues 161 to 171 (DDEDDMFSIKN) are compositionally biased toward acidic residues.

This sequence belongs to the asfivirus H171R family.

It localises to the virion. This is an uncharacterized protein from African swine fever virus (strain Badajoz 1971 Vero-adapted) (Ba71V).